Consider the following 270-residue polypeptide: MPRDNMASLIQRIARQACLTFRGSGGGRGASDRDAASGPEAPMQPGFPENLSKLKSLLTQLRAEDLNIAPRKATLQPLPPNLPPVTYMHIYETDGFSLGVFLLKSGTSIPLHDHPGMHGMLKVLYGTVRISCMDKLDAGGGQRPRALPPEQQFEPPLQPREREAVRPGVLRSRAEYTEASGPCILTPHRDNLHQIDAVEGPAAFLDILAPPYDPDDGRDCHYYRVLEPVRPKEASSSACDLPREVWLLETPQADDFWCEGEPYPGPKVFP.

The tract at residues 21–48 is disordered; sequence FRGSGGGRGASDRDAASGPEAPMQPGFP. Positions 112 and 114 each coordinate Fe cation. The tract at residues 140–164 is disordered; sequence GGQRPRALPPEQQFEPPLQPREREA. Position 193 (His-193) interacts with Fe cation. A cross-link (3'-(S-cysteinyl)-tyrosine (Cys-Tyr)) is located at residues 220–223; that stretch reads CHYY.

Monomer. Requires Fe cation as cofactor.

It carries out the reaction cysteamine + O2 = hypotaurine + H(+). It catalyses the reaction N-terminal L-cysteinyl-[protein] + O2 = N-terminal S-hydroxy-S-oxy-L-cysteinyl-[protein] + H(+). In terms of biological role, plays a vital role in regulating thiol metabolism and preserving oxygen homeostasis by oxidizing the sulfur of cysteamine and N-terminal cysteine-containing proteins to their corresponding sulfinic acids using O2 as a cosubstrate. Catalyzes the oxidation of cysteamine (2-aminoethanethiol) to hypotaurine. Catalyzes the oxidation of regulators of G-protein signaling 4 (RGS4) and 5 (RGS5) and interleukin-32 (IL32). This Homo sapiens (Human) protein is 2-aminoethanethiol dioxygenase (ADO).